Reading from the N-terminus, the 474-residue chain is AAA-ATPase At3g28610 (474 aa).

The signal sequence occupies residues 1-25 (MMGNMFGSSLASLFFLWATIQQIFP). 244-251 (GPPGTGKS) provides a ligand contact to ATP.

The protein belongs to the AAA ATPase family. BCS1 subfamily. Mg(2+) serves as cofactor.

The catalysed reaction is ATP + H2O = ADP + phosphate + H(+). The chain is AAA-ATPase At3g28610 from Arabidopsis thaliana (Mouse-ear cress).